The chain runs to 273 residues: Large ribosomal subunit protein uL2 (273 aa).

The interval 224 to 263 (AMNPVDHPHGGGEGRNFGKHPVTPWGLQTKGKKTRKNKRT) is disordered. The span at 253 to 263 (KGKKTRKNKRT) shows a compositional bias: basic residues.

It belongs to the universal ribosomal protein uL2 family. As to quaternary structure, part of the 50S ribosomal subunit. Forms a bridge to the 30S subunit in the 70S ribosome.

Functionally, one of the primary rRNA binding proteins. Required for association of the 30S and 50S subunits to form the 70S ribosome, for tRNA binding and peptide bond formation. It has been suggested to have peptidyltransferase activity; this is somewhat controversial. Makes several contacts with the 16S rRNA in the 70S ribosome. The chain is Large ribosomal subunit protein uL2 from Buchnera aphidicola subsp. Schizaphis graminum (strain Sg).